We begin with the raw amino-acid sequence, 64 residues long: Large ribosomal subunit protein bL35 (64 aa).

Belongs to the bacterial ribosomal protein bL35 family.

The polypeptide is Large ribosomal subunit protein bL35 (Desulforamulus reducens (strain ATCC BAA-1160 / DSM 100696 / MI-1) (Desulfotomaculum reducens)).